A 97-amino-acid polypeptide reads, in one-letter code: YcgL domain-containing protein Tcr_0238 (97 aa).

The 85-residue stretch at 3–87 (LLVSAYKSAK…SEIEKMGDMP (85 aa)) folds into the YcgL domain. A disordered region spans residues 78–97 (SEIEKMGDMPPPPEHLDNIF).

The polypeptide is YcgL domain-containing protein Tcr_0238 (Hydrogenovibrio crunogenus (strain DSM 25203 / XCL-2) (Thiomicrospira crunogena)).